The chain runs to 342 residues: Succinylglutamate desuccinylase (342 aa).

Zn(2+) contacts are provided by histidine 63, glutamate 66, and histidine 159. Residue glutamate 222 is part of the active site.

It belongs to the AspA/AstE family. Succinylglutamate desuccinylase subfamily. Requires Zn(2+) as cofactor.

It catalyses the reaction N-succinyl-L-glutamate + H2O = L-glutamate + succinate. It participates in amino-acid degradation; L-arginine degradation via AST pathway; L-glutamate and succinate from L-arginine: step 5/5. Its function is as follows. Transforms N(2)-succinylglutamate into succinate and glutamate. The polypeptide is Succinylglutamate desuccinylase (Paraburkholderia xenovorans (strain LB400)).